Consider the following 233-residue polypeptide: Large ribosomal subunit protein uL1 (233 aa).

The protein belongs to the universal ribosomal protein uL1 family. Part of the 50S ribosomal subunit.

Functionally, binds directly to 23S rRNA. The L1 stalk is quite mobile in the ribosome, and is involved in E site tRNA release. Its function is as follows. Protein L1 is also a translational repressor protein, it controls the translation of the L11 operon by binding to its mRNA. The polypeptide is Large ribosomal subunit protein uL1 (Polynucleobacter necessarius subsp. necessarius (strain STIR1)).